We begin with the raw amino-acid sequence, 150 residues long: UPF0098 protein CPn_0877/CP_0992/CPj0877/CpB0906 (150 aa).

Belongs to the UPF0098 family.

The sequence is that of UPF0098 protein CPn_0877/CP_0992/CPj0877/CpB0906 from Chlamydia pneumoniae (Chlamydophila pneumoniae).